Consider the following 178-residue polypeptide: Large ribosomal subunit protein uL6 (178 aa).

It belongs to the universal ribosomal protein uL6 family. In terms of assembly, part of the 50S ribosomal subunit.

In terms of biological role, this protein binds to the 23S rRNA, and is important in its secondary structure. It is located near the subunit interface in the base of the L7/L12 stalk, and near the tRNA binding site of the peptidyltransferase center. The sequence is that of Large ribosomal subunit protein uL6 from Lactococcus lactis subsp. lactis (strain IL1403) (Streptococcus lactis).